A 157-amino-acid chain; its full sequence is 6,7-dimethyl-8-ribityllumazine synthase (157 aa).

5-amino-6-(D-ribitylamino)uracil contacts are provided by residues Phe22, 57 to 59, and 81 to 83; these read AYE and TVI. (2S)-2-hydroxy-3-oxobutyl phosphate is bound at residue 86-87; that stretch reads GT. His89 (proton donor) is an active-site residue. 5-amino-6-(D-ribitylamino)uracil is bound at residue Phe114. Arg128 is a binding site for (2S)-2-hydroxy-3-oxobutyl phosphate.

Belongs to the DMRL synthase family. Forms an icosahedral capsid composed of 60 subunits, arranged as a dodecamer of pentamers.

The enzyme catalyses (2S)-2-hydroxy-3-oxobutyl phosphate + 5-amino-6-(D-ribitylamino)uracil = 6,7-dimethyl-8-(1-D-ribityl)lumazine + phosphate + 2 H2O + H(+). The protein operates within cofactor biosynthesis; riboflavin biosynthesis; riboflavin from 2-hydroxy-3-oxobutyl phosphate and 5-amino-6-(D-ribitylamino)uracil: step 1/2. Catalyzes the formation of 6,7-dimethyl-8-ribityllumazine by condensation of 5-amino-6-(D-ribitylamino)uracil with 3,4-dihydroxy-2-butanone 4-phosphate. This is the penultimate step in the biosynthesis of riboflavin. The protein is 6,7-dimethyl-8-ribityllumazine synthase of Pasteurella multocida (strain Pm70).